Consider the following 735-residue polypeptide: Protostadienol synthase A (735 aa).

Residues 129 to 170 (KNEMIRYLLNFVNEDGGWGLWINSPSTVFGTTMNYTMLRILG) form a PFTB 1 repeat. D460 functions as the Proton donor in the catalytic mechanism. PFTB repeat units lie at residues 487 to 528 (LAEA…YDNV), 564 to 604 (MARC…ETVG), and 613 to 660 (CRNA…ALMG).

Belongs to the terpene cyclase/mutase family.

The catalysed reaction is (S)-2,3-epoxysqualene = (17Z)-protosta-17(20),24-dien-3beta-ol. Its function is as follows. Protostadienol synthase which cyclizes (3S)-oxidosqualene to (17Z)-protosta-17(20),24-dien-3-beta-ol (protostadienol), the biosynthetic precursor of helvolic acid, a secondary metabolite which promotes virulence. The protein is Protostadienol synthase A (PDSA) of Arthroderma gypseum (strain ATCC MYA-4604 / CBS 118893) (Microsporum gypseum).